Reading from the N-terminus, the 1371-residue chain is F-actin-uncapping protein LRRC16A (1371 aa).

Met1 bears the N-acetylmethionine mark. Ser122 bears the Phosphoserine mark. LRR repeat units lie at residues 245-269 (SNRLEELVLENAGLRTDFAQKLASA), 275-298 (NSGLHTINLAGNPLEDRGVSSLSI), 304-327 (PKGLKHLNLSKTSLSPKGVNSLSQ), 336-363 (ASTLVHLDLSGNVLRGDDLSHMYNFLAQ), 391-418 (LQYLAVLNLSRTVFSHRKGKEVPPSFKQ), 423-447 (SLALMHINLSGTKLSPEPLKALLLG), 481-506 (IHNITSLDISDNGLESDLSTLIVWLS), 543-566 (ESPLQSLSLADSKLKTEVTIIINA), 570-593 (NTSLTKVDISGNGMGDMGAKMLAK), and 654-678 (LQKIENYLLRNHETRKYLQEQAYRL). A coiled-coil region spans residues 710–734 (GDAIQEDLKSAERLMRDAKNSKTLL). Thr916 is modified (phosphothreonine). 3 disordered regions span residues 957–1000 (PFPS…QPTQ), 1036–1159 (KMDS…RRYG), and 1172–1371 (KAKQ…FIFV). An LRR 11 repeat occupies 958–981 (FPSLRQEKRSSGFISELPSEEGKK). The tract at residues 958–1082 (FPSLRQEKRS…LIKSRSKSER (125 aa)) is inhibits capping activity of CAPZA2. Ser968 carries the phosphoserine modification. 2 stretches are compositionally biased toward basic and acidic residues: residues 977-986 (EEGKKLEHFT) and 1036-1061 (KMDSKKWSTRGSESHELNEGGDEKKK). Residues 1055–1089 (GGDEKKKRDSRKSSGFLNLIKSRSKSERPPTILMT) are necessary for localization at the cell membrane. Phosphoserine occurs at positions 1067 and 1094. Composition is skewed to basic and acidic residues over residues 1106–1130 (CPRKDTKAAEHNGNSERIEEIKTPD) and 1139–1148 (EIGKVERSDS). Over residues 1190–1199 (AVSQDSSSPA) the composition is skewed to polar residues. Thr1228 is modified (phosphothreonine). Over residues 1231–1243 (KNTKAEPKAEAGS) the composition is skewed to basic and acidic residues. Low complexity predominate over residues 1244 to 1265 (RSRSSSSTPTSPKPLLQSPKPS). 6 positions are modified to phosphoserine: Ser1280, Ser1288, Ser1291, Ser1315, Ser1324, and Ser1331. A compositionally biased stretch (polar residues) spans 1313–1326 (QSSPQPSPRTFSQE). Positions 1340–1353 (QEQKQRSSSKDGHQ) are enriched in basic and acidic residues. Position 1360 is a phosphoserine (Ser1360).

It belongs to the CARMIL family. Homodimer. Interacts (via C-terminus) with heterodimer capping protein (CP); this interaction uncaps barbed ends capped by CP, enhances barbed-end actin polymerization and promotes lamellipodial formation and cell migration. Interacts with heterodimer capping protein (CP). Interacts with MYO1E. Interacts with TRIO. Expressed in lung, placenta, small intestine, liver, thymus, colon, skeletal muscle, heart and brain. Higher expression in kidney.

It localises to the cytoplasm. The protein localises to the cytoskeleton. Its subcellular location is the cell membrane. The protein resides in the cell projection. It is found in the lamellipodium. In terms of biological role, cell membrane-cytoskeleton-associated protein that plays a role in the regulation of actin polymerization at the barbed end of actin filaments. Prevents F-actin heterodimeric capping protein (CP) activity at the leading edges of migrating cells, and hence generates uncapped barbed ends and enhances actin polymerization, however, seems unable to nucleate filaments. Plays a role in lamellipodial protrusion formations and cell migration. This chain is F-actin-uncapping protein LRRC16A, found in Homo sapiens (Human).